The chain runs to 184 residues: Peptide deformylase 2 (184 aa).

Residues C110 and H153 each contribute to the Fe cation site. E154 is a catalytic residue. Residue H157 participates in Fe cation binding.

The protein belongs to the polypeptide deformylase family. The cofactor is Fe(2+).

It catalyses the reaction N-terminal N-formyl-L-methionyl-[peptide] + H2O = N-terminal L-methionyl-[peptide] + formate. Its function is as follows. Removes the formyl group from the N-terminal Met of newly synthesized proteins. Requires at least a dipeptide for an efficient rate of reaction. N-terminal L-methionine is a prerequisite for activity but the enzyme has broad specificity at other positions. This Bacillus subtilis (strain 168) protein is Peptide deformylase 2 (defB).